The sequence spans 304 residues: Acetyl-coenzyme A carboxylase carboxyl transferase subunit beta (304 aa).

A CoA carboxyltransferase N-terminal domain is found at 23 to 292 (VWTKCDSCGQ…PNPDAPREGV (270 aa)). Zn(2+) contacts are provided by C27, C30, C46, and C49. The C4-type zinc-finger motif lies at 27-49 (CDSCGQVLYRAELERNLEVCPKC). The segment at 284 to 304 (NPDAPREGVVVPPAPDQESEV) is disordered.

Belongs to the AccD/PCCB family. As to quaternary structure, acetyl-CoA carboxylase is a heterohexamer composed of biotin carboxyl carrier protein (AccB), biotin carboxylase (AccC) and two subunits each of ACCase subunit alpha (AccA) and ACCase subunit beta (AccD). Zn(2+) serves as cofactor.

The protein resides in the cytoplasm. It catalyses the reaction N(6)-carboxybiotinyl-L-lysyl-[protein] + acetyl-CoA = N(6)-biotinyl-L-lysyl-[protein] + malonyl-CoA. It participates in lipid metabolism; malonyl-CoA biosynthesis; malonyl-CoA from acetyl-CoA: step 1/1. In terms of biological role, component of the acetyl coenzyme A carboxylase (ACC) complex. Biotin carboxylase (BC) catalyzes the carboxylation of biotin on its carrier protein (BCCP) and then the CO(2) group is transferred by the transcarboxylase to acetyl-CoA to form malonyl-CoA. The chain is Acetyl-coenzyme A carboxylase carboxyl transferase subunit beta from Salmonella paratyphi A (strain ATCC 9150 / SARB42).